The chain runs to 466 residues: MRSSAALALLLCAGQVFALPVNSPMTKGDTKVMKCVLEVISDSLSKPSPMPVSPECLETLQGDERVLSILRHQNLLKELQDLALQGAKERAQQQQQQQQQQQQQQQQQQQQHSSFEDELSEVFENQSPAAKHGDAASEAPSKDTVEKREDSDKGQQDAFEGTTEGPRPQAFPEPKQESSMMGNSQSPGEDTANNTQSPTSLPSQEHGIPQTTEGSERGPSAQQQARKAKQEEKEEEEEEKEEEEEEKEEKAIAREKAGPKEVPTAASSSHFYSGYKKIQKDDDGQSESQAVNGKTGASEAVPSEGKGELEHSQQEEDGEEAMAGPPQGLFPGGKGQELERKQQEEEEEEERLSREWEDKRWSRMDQLAKELTAEKRLEGEDDPDRSMKLSFRARAYGFRDPGPQLRRGWRPSSREDSVEARGDFEEKKEEEGSANRRAEDQELESLSAIEAELEKVAHQLQALRRG.

Positions 1–18 (MRSSAALALLLCAGQVFA) are cleaved as a signal peptide. A disulfide bridge connects residues Cys-35 and Cys-56. The tract at residues 91–443 (AQQQQQQQQQ…ANRRAEDQEL (353 aa)) is disordered. The span at 92–111 (QQQQQQQQQQQQQQQQQQQQ) shows a compositional bias: low complexity. Position 114 is a phosphoserine (Ser-114). Positions 131-155 (KHGDAASEAPSKDTVEKREDSDKGQ) are enriched in basic and acidic residues. Positions 177 to 213 (ESSMMGNSQSPGEDTANNTQSPTSLPSQEHGIPQTTE) are enriched in polar residues. The residue at position 215 (Ser-215) is a Phosphoserine. Residues 233-247 (KEEEEEEKEEEEEEK) are compositionally biased toward acidic residues. Basic and acidic residues predominate over residues 248–259 (EEKAIAREKAGP). 2 positions are modified to phosphoserine: Ser-288 and Ser-312. The span at 305–314 (GKGELEHSQQ) shows a compositional bias: basic and acidic residues. A Glycine amide modification is found at Gly-332. Residues 351 to 378 (RLSREWEDKRWSRMDQLAKELTAEKRLE) show a composition bias toward basic and acidic residues. 2 positions are modified to phosphoserine: Ser-353 and Ser-386. At Met-387 the chain carries Methionine sulfoxide. The span at 412 to 440 (SSREDSVEARGDFEEKKEEEGSANRRAED) shows a compositional bias: basic and acidic residues. Phosphoserine is present on residues Ser-413, Ser-417, and Ser-433. A glycan (O-linked (Xyl...) (chondroitin sulfate) serine) is linked at Ser-433. Pyrrolidone carboxylic acid is present on Gln-441. Ser-447 carries the phosphoserine modification.

This sequence belongs to the chromogranin/secretogranin protein family. As to quaternary structure, self-interacts; self-assembly is promoted in vitro by chondroitin sulfate attachment which occurs at mildly acidic pH conditions. Interacts with SCG3; this interaction is optimal in conditions mimicking the lumenal milieu of the trans-Golgi network, i.e. pH 5.5 and 10 mM Ca(+2). Interacts with ITPR1 in the secretory granules. Post-translationally, O-glycosylated; contains chondroitin sulfate (CS). CS attachment is pH-dependent, being observed at mildly acidic conditions of pH 5 but not at neutral pH, and promotes self-assembly in vitro. In terms of tissue distribution, expressed in the brain and adrenal and pituitary glands.

The protein localises to the cytoplasmic vesicle. The protein resides in the secretory vesicle. Its subcellular location is the neuronal dense core vesicle. It is found in the secreted. Strongly inhibits glucose induced insulin release from the pancreas. In terms of biological role, catestatin inhibits catecholamine release from chromaffin cells and noradrenergic neurons by acting as a non-competitive nicotinic cholinergic antagonist. Can induce mast cell migration, degranulation and production of cytokines and chemokines. Its function is as follows. Serpinin regulates granule biogenesis in endocrine cells by up-regulating the transcription of protease nexin 1 (SERPINE2) via a cAMP-PKA-SP1 pathway. This leads to inhibition of granule protein degradation in the Golgi complex which in turn promotes granule formation. Serpinin and pGlu-serpinin can enhance both myocardial contractility (inotropy) and relaxation (lusitropy) and this cardio-stimulation requires a beta 1-adrenergic receptor/adenylate cyclase/cAMP/PKA pathway. The polypeptide is Chromogranin-A (Chga) (Rattus norvegicus (Rat)).